The primary structure comprises 192 residues: GTP cyclohydrolase 1 (192 aa).

Zn(2+)-binding residues include Cys-82, His-85, and Cys-153.

This sequence belongs to the GTP cyclohydrolase I family. As to quaternary structure, toroid-shaped homodecamer, composed of two pentamers of five dimers.

It carries out the reaction GTP + H2O = 7,8-dihydroneopterin 3'-triphosphate + formate + H(+). It functions in the pathway cofactor biosynthesis; 7,8-dihydroneopterin triphosphate biosynthesis; 7,8-dihydroneopterin triphosphate from GTP: step 1/1. In Rickettsia bellii (strain OSU 85-389), this protein is GTP cyclohydrolase 1.